The sequence spans 354 residues: DNA polymerase IV 2 (354 aa).

One can recognise a UmuC domain in the interval 4–184; it reads IIHIDMDAFY…LPVKKFHGVG (181 aa). The Mg(2+) site is built by D8 and D102. E103 is a catalytic residue.

Belongs to the DNA polymerase type-Y family. Monomer. It depends on Mg(2+) as a cofactor.

The protein localises to the cytoplasm. The enzyme catalyses DNA(n) + a 2'-deoxyribonucleoside 5'-triphosphate = DNA(n+1) + diphosphate. Poorly processive, error-prone DNA polymerase involved in untargeted mutagenesis. Copies undamaged DNA at stalled replication forks, which arise in vivo from mismatched or misaligned primer ends. These misaligned primers can be extended by PolIV. Exhibits no 3'-5' exonuclease (proofreading) activity. May be involved in translesional synthesis, in conjunction with the beta clamp from PolIII. This chain is DNA polymerase IV 2 (dinB2), found in Rhizobium meliloti (strain 1021) (Ensifer meliloti).